Reading from the N-terminus, the 438-residue chain is Putative F-box/FBD/LRR-repeat protein At2g05300 (438 aa).

Residues 13–59 form the F-box domain; the sequence is EDRISQLPDPLLTQILNLLPTEEAVKTSVLSTRWRTLWLWVPNLELS. LRR repeat units follow at residues 135–166, 167–192, 235–261, and 318–346; these read CDSL…RLKD, IVFH…KIDV, CLII…DISL, and YVTL…ILER. Residues 362 to 409 form the FBD domain; that stretch reads SMSSVPECLLTSLEFVEFKAPICGLGPEMMLVWYFLKNSPTLKKLTLP.

In Arabidopsis thaliana (Mouse-ear cress), this protein is Putative F-box/FBD/LRR-repeat protein At2g05300.